A 248-amino-acid polypeptide reads, in one-letter code: Probable transcriptional regulatory protein BBta_6910 (248 aa).

The protein belongs to the TACO1 family.

The protein localises to the cytoplasm. This Bradyrhizobium sp. (strain BTAi1 / ATCC BAA-1182) protein is Probable transcriptional regulatory protein BBta_6910.